Reading from the N-terminus, the 1544-residue chain is MSEGSGSENAAAAEAAAEAEAATEAALMAEAVAVAYQSDEEEQPEAEDMPEQAGDNQEEDAAEQQDGGEPEADEDADADDAMSVENAENESDSGGNAEETAAADRRQATKKELTQIIDKWEQQQTQNGYDPVPTLRSLAEIFEREKDVYRRKDPDPLDSRHPYRADPSCQYGLLLKLLFRKDTFMGKLLNDYLRENYFSRQNVSRSSLELNILACRLILEIMPGMETSAVFQTAEGDGTINRIYSWAEDSIEPLQSYATGLLAEAMEVSDIAINFRDLNIRLVPKMIKRLHMLLAISKSATSDVNTSMHNLSADSSTAGMLSWVACASNASAPQSPQHNGSGLGASSSQHGDASNMSILFENSRDAFSVSRYYKRMYIPLHPATADTSQMLIMRFLTSLGEYQEFLAMAFENNVMQLIFGYLENLDRRDTCLAYEVLKYLASLLCHKKFALEFISHGGLELLLKVPRPSLATTGVSIAIYYLAYCEDAMERICSMQRPLISELVRYALWILGRCHDSSKCHATMFFSLSFQFKVILDEFDAQDGLRKLYNVISVLKILDPSHNDSDNDSDFNEDVECASRQMVRHVCVALKRYMEAHFFYKYNSFLCQTNAASPAPSSAHYFNQNPTVAAKLTFDQLNDQIRTLQEHTSIRAHWQPVDQLMKLGGITMLLRIIAFSYDWVNSGRSETVRSALDVLSVCCIIPRVYVVLCERLLMLDKTTTSGFCSVLGAAAGEISSDAEVIKSALAVLCHCVCSPIIRKDSGTSLIKFGTSSRKNKANHKYAEELIERVWESVCSNNGIVVLLSLMQTKGPITDADCIRGMACRALAGLARSDRVRQIVSKLPLFASGQLQTLMRDPILQEKRAEHVIFQKYALELLERVSGKTKPLNNPLDPSLSNMHKANVIAQTRIQYNKQQLYQLIFEHLESNGLSQTAQMLQREVGLPLQTPTTRSFHQSPFDYKSLPSGSSSLSRNRLRSRMQDVNAAIMGNGDLNRSFGEDSSPAGAGGSNAGDGVSIPNFSSLNTTQTPIKIRRTDRSSVSRSIQKQAMEPGGMSVGLAEDGQLHPKRITLNTIVTEYLTNQHSLCNNPVTTCPQFDLYEPHKCPDPKPSRLLSSNYNLTSRHARTQAGFNTSRFDRRYVHTHFSPWRSIRSADYEDLEFTCCDLAGKYIIVGTQQGDGRVFNMNDGVEQFFSNCHNFSVDAIKANRAGDLVITSSFWRTPTSILWSIADDEFKLKLRLPDVTYCEFSQTVQDRLLGTQNECATLFDINTGSKVASFTPTIPNLYTKNRATLCRTDELILSDGVLWDVRSGKEIHKFDKFNQCISGVFHPNCLEIIANTEVWDLRTFHLLQTVPVLDQRNCTFSPMHVIYGASLGADRDHDMETTTYDTSFNVLDAYDYSSIATIDVKRNINDLSVSANGSLIAVVEDYSGYESKQETYVKIYAVGVKKSERSEEEDDEEVPESDEDGSDTGSENTFAIGQNLLGFPLLRNLHGSDNDDEDLDEDDDDGEPLDSDDDSDDDDGSDNGDDDGDFDVLEYFDRSSSDD.

Residues 1-110 (MSEGSGSENA…AAADRRQATK (110 aa)) are disordered. The span at 10–35 (AAAAEAAAEAEAATEAALMAEAVAVA) shows a compositional bias: low complexity. Positions 38–91 (SDEEEQPEAEDMPEQAGDNQEEDAAEQQDGGEPEADEDADADDAMSVENAENES) are enriched in acidic residues. Residues Ser565 and Ser569 each carry the phosphoserine modification. Residues 912-944 (NKQQLYQLIFEHLESNGLSQTAQMLQREVGLPL) enclose the LisH domain. Disordered stretches follow at residues 946-973 (TPTTRSFHQSPFDYKSLPSGSSSLSRNR) and 987-1059 (GNGD…LAED). Ser955 is subject to Phosphoserine. Over residues 961–971 (SLPSGSSSLSR) the composition is skewed to low complexity. The span at 1016–1027 (PNFSSLNTTQTP) shows a compositional bias: polar residues. Short sequence motifs (DWD box) lie at residues 1302 to 1309 (VLWDVRSG) and 1338 to 1345 (EVWDLRTF). 2 disordered regions span residues 1447-1475 (KSERSEEEDDEEVPESDEDGSDTGSENTF) and 1487-1544 (LRNL…SSDD). Composition is skewed to acidic residues over residues 1451–1467 (SEEEDDEEVPESDEDGS) and 1495–1535 (NDDE…DVLE).

This sequence belongs to the VPRBP/DCAF1 family. In terms of assembly, component of the CUL4-RBX1-DDB1-DCAF1 E3 ubiquitin-protein ligase complex. Interacts with l(2)gl.

It localises to the nucleus. Its pathway is protein modification; protein ubiquitination. Its function is as follows. Probable substrate recognition component of tsome E3 ubiquitin-protein ligase complex. Plays a key role in cell competition via its interaction with l(2)gl. The protein is Protein mahjong (mahj) of Drosophila melanogaster (Fruit fly).